Here is a 654-residue protein sequence, read N- to C-terminus: Fructose-1,6-bisphosphatase class 3 (654 aa).

A disordered region spans residues 288 to 307; it reads NPAFKPKKRPDKHERLTQRE. The span at 298–307 shows a compositional bias: basic and acidic residues; that stretch reads DKHERLTQRE.

Belongs to the FBPase class 3 family. Mn(2+) serves as cofactor.

It carries out the reaction beta-D-fructose 1,6-bisphosphate + H2O = beta-D-fructose 6-phosphate + phosphate. It participates in carbohydrate biosynthesis; gluconeogenesis. The polypeptide is Fructose-1,6-bisphosphatase class 3 (Staphylococcus aureus (strain Mu3 / ATCC 700698)).